The chain runs to 381 residues: Periphilin-1 (381 aa).

Composition is skewed to basic and acidic residues over residues 1-28, 39-65, and 79-121; these read MWSEGRYDYDRLPRERVPPRSHPSDGYH, PLLDKRPPLLDKRPPLLARPDEGGYSR, and RSFS…DGFR. Disordered stretches follow at residues 1-65 and 79-260; these read MWSE…GYSR and RSFS…KSDE. A Nuclear localization signal motif is present at residues 117–123; it reads RDGFRRK. Residue Lys-123 forms a Glycyl lysine isopeptide (Lys-Gly) (interchain with G-Cter in SUMO2) linkage. Residues Ser-124, Ser-128, Ser-147, and Ser-154 each carry the phosphoserine modification. Over residues 130 to 156 the composition is skewed to basic and acidic residues; it reads YSRDRSPHKRDAPFFRESPVGRKDSPH. Residues 157 to 168 show a composition bias toward low complexity; sequence SRSGSSVSSRSY. Positions 175 to 187 are enriched in basic residues; that stretch reads THSFHQSQHRKSS. At Ser-181 the chain carries Phosphoserine. Residue Lys-194 forms a Glycyl lysine isopeptide (Lys-Gly) (interchain with G-Cter in SUMO2) linkage. Residues 195-208 show a composition bias toward basic and acidic residues; that stretch reads RQNEAIRGRGKERS. A Phosphoserine modification is found at Ser-211. Residue Lys-213 forms a Glycyl lysine isopeptide (Lys-Gly) (interchain with G-Cter in SUMO2) linkage. Phosphoserine occurs at positions 215 and 219. A compositionally biased stretch (low complexity) spans 217–230; sequence DASPSSSSAVASSK. The span at 231–260 shows a compositional bias: basic and acidic residues; it reads ALDKPSRLTEKELAEAESKWANETLEKSDE. Residue Lys-241 forms a Glycyl lysine isopeptide (Lys-Gly) (interchain with G-Cter in SUMO2) linkage. The residue at position 249 (Lys-249) is an N6-acetyllysine; alternate. Residue Lys-249 forms a Glycyl lysine isopeptide (Lys-Gly) (interchain with G-Cter in SUMO2); alternate linkage. Residue Ser-339 is modified to Phosphoserine. Residue Lys-342 forms a Glycyl lysine isopeptide (Lys-Gly) (interchain with G-Cter in SUMO2) linkage.

In terms of assembly, homodimer. Component of the HUSH complex; at least composed of TASOR, PPHLN1 and MPHOSPH8. Interacts with SIN3A and HDAC1. May interact with PPL. In terms of tissue distribution, ubiquitously expressed. Strong expression in the developing somites and limbs, the embryonic nervous system and the adult brain.

It is found in the nucleus. It localises to the cytoplasm. Its subcellular location is the chromosome. Its function is as follows. Component of the HUSH complex, a multiprotein complex that mediates epigenetic repression. The HUSH complex is recruited to genomic loci rich in H3K9me3 and is probably required to maintain transcriptional silencing by promoting recruitment of SETDB1, a histone methyltransferase that mediates further deposition of H3K9me3. In the HUSH complex, contributes to the maintenance of the complex at chromatin. Acts as a transcriptional corepressor and regulates the cell cycle, probably via the HUSH complex. The HUSH complex is also involved in the silencing of unintegrated retroviral DNA: some part of the retroviral DNA formed immediately after infection remains unintegrated in the host genome and is transcriptionally repressed. May be involved in epithelial differentiation by contributing to epidermal integrity and barrier formation. This Mus musculus (Mouse) protein is Periphilin-1.